We begin with the raw amino-acid sequence, 177 residues long: Adenine phosphoribosyltransferase (177 aa).

It belongs to the purine/pyrimidine phosphoribosyltransferase family. As to quaternary structure, homodimer.

It is found in the cytoplasm. The enzyme catalyses AMP + diphosphate = 5-phospho-alpha-D-ribose 1-diphosphate + adenine. It functions in the pathway purine metabolism; AMP biosynthesis via salvage pathway; AMP from adenine: step 1/1. In terms of biological role, catalyzes a salvage reaction resulting in the formation of AMP, that is energically less costly than de novo synthesis. This Chlorobaculum parvum (strain DSM 263 / NCIMB 8327) (Chlorobium vibrioforme subsp. thiosulfatophilum) protein is Adenine phosphoribosyltransferase.